The primary structure comprises 535 residues: Mannan polymerase I complex VAN1 subunit (535 aa).

The Cytoplasmic segment spans residues 1–64 (MGMFFNLRSN…STPSKFQLTV (64 aa)). Residues 22–48 (LPISRNGSSNNIKDKRSEHNSNSLKGK) are disordered. Ser25 is modified (phosphoserine). The helical; Signal-anchor for type II membrane protein transmembrane segment at 65 to 81 (SITSLIIIAVLSLYLFI) threads the bilayer. Residues 82–535 (SFLSGMGIGV…REREKRRQSE (454 aa)) lie on the Lumenal side of the membrane. Residues Asn215 and Asn251 are each glycosylated (N-linked (GlcNAc...) asparagine).

Belongs to the ANP1/MMN9/VAN1 family. In terms of assembly, component of the M-Pol I complex which contains MNN9 and VAN1. Post-translationally, glycosylated.

It localises to the endoplasmic reticulum membrane. The protein resides in the golgi apparatus membrane. Functionally, involved in regulation of the phosphorylation of a number of proteins, some of which appear to be important in cell growth control. The M-Pol I complex possesses alpha-1,6-mannosyltransferase activity and is probably involved in the elongation of the mannan backbone of N-linked glycans on cell wall and periplasmic proteins. This Saccharomyces cerevisiae (strain ATCC 204508 / S288c) (Baker's yeast) protein is Mannan polymerase I complex VAN1 subunit (VAN1).